Consider the following 160-residue polypeptide: SsrA-binding protein (160 aa).

Residues 136–160 (KRHVEKERDANREVQRAMRSKGKDD) are disordered.

Belongs to the SmpB family.

It is found in the cytoplasm. Its function is as follows. Required for rescue of stalled ribosomes mediated by trans-translation. Binds to transfer-messenger RNA (tmRNA), required for stable association of tmRNA with ribosomes. tmRNA and SmpB together mimic tRNA shape, replacing the anticodon stem-loop with SmpB. tmRNA is encoded by the ssrA gene; the 2 termini fold to resemble tRNA(Ala) and it encodes a 'tag peptide', a short internal open reading frame. During trans-translation Ala-aminoacylated tmRNA acts like a tRNA, entering the A-site of stalled ribosomes, displacing the stalled mRNA. The ribosome then switches to translate the ORF on the tmRNA; the nascent peptide is terminated with the 'tag peptide' encoded by the tmRNA and targeted for degradation. The ribosome is freed to recommence translation, which seems to be the essential function of trans-translation. The sequence is that of SsrA-binding protein from Ectopseudomonas mendocina (strain ymp) (Pseudomonas mendocina).